The sequence spans 305 residues: Uridylate-specific endoribonuclease D (305 aa).

The first 17 residues, 1-17, serve as a signal peptide directing secretion; the sequence is MKVYFVFLCLLPSLISG. The EndoU domain maps to 33-305; the sequence is SNAEIQSLAE…RYVASSYPNI (273 aa). Active-site residues include histidine 182, histidine 197, and lysine 240. Residue asparagine 288 is glycosylated (N-linked (GlcNAc...) asparagine).

This sequence belongs to the ENDOU family. As to quaternary structure, monomer. It depends on Mn(2+) as a cofactor.

It localises to the secreted. It carries out the reaction ribonucleotidyl-uridine-RNA = a 5'-end dephospho-uridine-RNA + a 3'-end 2',3'-cyclophospho-ribonucleotide-RNA. Its function is as follows. Endoribonuclease that cleaves single-stranded RNAs at 5' of uridylates and releases a product with a 2',3'-cyclic phosphate at the 3'-end. This chain is Uridylate-specific endoribonuclease D (endou-d), found in Xenopus laevis (African clawed frog).